The primary structure comprises 451 residues: Probable beta-1,4-xylosyltransferase GT43E (451 aa).

Over 1 to 88 the chain is Cytoplasmic; it reads MVSSRRNTGG…SKSRGLSCKR (88 aa). The chain crosses the membrane as a helical; Signal-anchor for type II membrane protein span at residues 89 to 109; it reads LAFHLFVCFMVGIFIGFMPFF. The Lumenal portion of the chain corresponds to 110–451; the sequence is SVDVSQKIVS…KNLDAVIPVT (342 aa). N-linked (GlcNAc...) asparagine glycans are attached at residues N260 and N366.

It belongs to the glycosyltransferase 43 family.

The protein localises to the golgi apparatus membrane. Probable beta-1,4-xylosyltransferase involved in xylan biosynthesis in cell walls. This Oryza sativa subsp. japonica (Rice) protein is Probable beta-1,4-xylosyltransferase GT43E.